Consider the following 537-residue polypeptide: Beta-hexosaminidase subunit beta (537 aa).

Positions 1–23 (MPGSPRRAPGLLLQALVAMVSLA) are cleaved as a signal peptide. N-linked (GlcNAc...) asparagine glycosylation occurs at asparagine 62. Cysteines 69 and 115 form a disulfide. Residues asparagine 168 and asparagine 305 are each glycosylated (N-linked (GlcNAc...) asparagine). 2 cysteine pairs are disulfide-bonded: cysteine 287–cysteine 338 and cysteine 512–cysteine 529. Catalysis depends on glutamate 333, which acts as the Proton donor.

It belongs to the glycosyl hydrolase 20 family. There are 3 forms of beta-hexosaminidase: hexosaminidase A is a heterodimer composed of one subunit alpha and one subunit beta (chain A and B); hexosaminidase B is a homodimer of two beta subunits (two chains A and B); hexosaminidase S is a homodimer of two alpha subunits. The composition of the dimer (isozyme A versus isozyme S) has a significant effect on the substrate specificity of the alpha subunit active site.

The protein resides in the lysosome. It is found in the cytoplasmic vesicle. Its subcellular location is the secretory vesicle. It localises to the cortical granule. The catalysed reaction is Hydrolysis of terminal non-reducing N-acetyl-D-hexosamine residues in N-acetyl-beta-D-hexosaminides.. The enzyme catalyses N-acetyl-beta-D-galactosaminyl-(1-&gt;4)-beta-D-3-sulfogalactosyl-(1-&gt;4)-beta-D-glucosyl-(1&lt;-&gt;1')-ceramide + H2O = a beta-D-3-sulfogalactosyl-(1-&gt;4)-beta-D-glucosyl-(1&lt;-&gt;1')-ceramide + N-acetyl-beta-D-galactosamine. It catalyses the reaction a ganglioside GM2 (d18:1(4E)) + H2O = a ganglioside GM3 (d18:1(4E)) + N-acetyl-beta-D-galactosamine. It carries out the reaction a ganglioside GM2 + H2O = a ganglioside GM3 + N-acetyl-beta-D-galactosamine. The catalysed reaction is beta-D-GalNAc-(1-&gt;4)-alpha-L-IdoA-(1-&gt;3)-beta-D-GalNAc-4-sulfate-(1-&gt;4)-alpha-L-IdoA-(1-&gt;3)-D-GalNAc-4-sulfate + H2O = alpha-L-IdoA-(1-&gt;3)-beta-D-GalNAc-4-sulfate-(1-&gt;4)-alpha-L-IdoA-(1-&gt;3)-D-GalNAc-4-sulfate + N-acetyl-D-galactosamine. The enzyme catalyses N-acetyl-beta-D-6-sulfogalactosaminyl-(1-&gt;4)-alpha-L-iduronyl-(1-&gt;3)-N-acetyl-D-6-sulfogalactosamine + H2O = alpha-L-iduronyl-(1-&gt;3)-N-acetyl-D-6-sulfogalactosamine + N-acetyl-D-6-sulfogalactosamine. With respect to regulation, addition of GM2A stimulates the hydrolysis of sulfated glycosphingolipid SM2 and the ganglioside GM2. Hydrolyzes the non-reducing end N-acetyl-D-hexosamine and/or sulfated N-acetyl-D-hexosamine of glycoconjugates, such as the oligosaccharide moieties from proteins and neutral glycolipids, or from certain mucopolysaccharides. The isozyme B does not hydrolyze each of these substrates, however hydrolyzes efficiently neutral oligosaccharide. Only the isozyme A is responsible for the degradation of GM2 gangliosides in the presence of GM2A. During fertilization is responsible, at least in part, for the zona block to polyspermy. Present in the cortical granules of non-activated oocytes, is exocytosed during the cortical reaction in response to oocyte activation and inactivates the sperm galactosyltransferase-binding site, accounting for the block in sperm binding to the zona pellucida. The protein is Beta-hexosaminidase subunit beta of Rattus norvegicus (Rat).